The primary structure comprises 409 residues: Peptidase T (409 aa).

A Zn(2+)-binding site is contributed by histidine 78. Residue aspartate 80 is part of the active site. Aspartate 140 provides a ligand contact to Zn(2+). Catalysis depends on glutamate 173, which acts as the Proton acceptor. Zn(2+)-binding residues include glutamate 174, aspartate 196, and histidine 379.

It belongs to the peptidase M20B family. It depends on Zn(2+) as a cofactor.

The protein resides in the cytoplasm. It carries out the reaction Release of the N-terminal residue from a tripeptide.. Its function is as follows. Cleaves the N-terminal amino acid of tripeptides. The polypeptide is Peptidase T (Salmonella enteritidis PT4 (strain P125109)).